The primary structure comprises 194 residues: Holliday junction branch migration complex subunit RuvA (194 aa).

Residues Met-1–Leu-64 are domain I. Residues Arg-65–Pro-140 are domain II. The tract at residues Pro-140–Gln-144 is flexible linker. Residues Leu-145 to Arg-194 are domain III.

It belongs to the RuvA family. Homotetramer. Forms an RuvA(8)-RuvB(12)-Holliday junction (HJ) complex. HJ DNA is sandwiched between 2 RuvA tetramers; dsDNA enters through RuvA and exits via RuvB. An RuvB hexamer assembles on each DNA strand where it exits the tetramer. Each RuvB hexamer is contacted by two RuvA subunits (via domain III) on 2 adjacent RuvB subunits; this complex drives branch migration. In the full resolvosome a probable DNA-RuvA(4)-RuvB(12)-RuvC(2) complex forms which resolves the HJ.

The protein localises to the cytoplasm. The RuvA-RuvB-RuvC complex processes Holliday junction (HJ) DNA during genetic recombination and DNA repair, while the RuvA-RuvB complex plays an important role in the rescue of blocked DNA replication forks via replication fork reversal (RFR). RuvA specifically binds to HJ cruciform DNA, conferring on it an open structure. The RuvB hexamer acts as an ATP-dependent pump, pulling dsDNA into and through the RuvAB complex. HJ branch migration allows RuvC to scan DNA until it finds its consensus sequence, where it cleaves and resolves the cruciform DNA. This Xanthomonas euvesicatoria pv. vesicatoria (strain 85-10) (Xanthomonas campestris pv. vesicatoria) protein is Holliday junction branch migration complex subunit RuvA.